Reading from the N-terminus, the 460-residue chain is Chromosomal replication initiator protein DnaA (460 aa).

The tract at residues 1–73 (MEISIDSLWS…ANVVQSILGH (73 aa)) is domain I, interacts with DnaA modulators. Residues 73 to 116 (HPVEIYITVAKGEEFEEIGGGGAWELPTTNSIYETPNQNRQPNT) are domain II. The interval 117–333 (ELNAKYVFSR…GALTRALAYI (217 aa)) is domain III, AAA+ region. Gly161, Gly163, Lys164, and Thr165 together coordinate ATP. Residues 334–460 (SIWGLPMTVA…MNSRSRKPSL (127 aa)) are domain IV, binds dsDNA.

Belongs to the DnaA family. As to quaternary structure, oligomerizes as a right-handed, spiral filament on DNA at oriC.

The protein localises to the cytoplasm. Plays an essential role in the initiation and regulation of chromosomal replication. ATP-DnaA binds to the origin of replication (oriC) to initiate formation of the DNA replication initiation complex once per cell cycle. Binds the DnaA box (a 9 base pair repeat at the origin) and separates the double-stranded (ds)DNA. Forms a right-handed helical filament on oriC DNA; dsDNA binds to the exterior of the filament while single-stranded (ss)DNA is stabiized in the filament's interior. The ATP-DnaA-oriC complex binds and stabilizes one strand of the AT-rich DNA unwinding element (DUE), permitting loading of DNA polymerase. After initiation quickly degrades to an ADP-DnaA complex that is not apt for DNA replication. Binds acidic phospholipids. The sequence is that of Chromosomal replication initiator protein DnaA from Trichormus variabilis (strain ATCC 29413 / PCC 7937) (Anabaena variabilis).